The chain runs to 420 residues: Aminoacyltransferase FemA (420 aa).

This sequence belongs to the FemABX family. As to quaternary structure, homodimer. Interacts with FemB.

Its subcellular location is the cytoplasm. It catalyses the reaction beta-D-GlcNAc-(1-&gt;4)-Mur2Ac(oyl-L-Ala-D-isoglutaminyl-L-Lys-(N(6)-Gly)-D-Ala-D-Ala)-di-trans,octa-cis-undecaprenyl diphosphate + 2 glycyl-tRNA(Gly) = MurNAc-L-Ala-D-isoglutaminyl-L-Lys-(N(6)-tri-Gly)-D-Ala-D-Ala-diphospho-di-trans,octa-cis-undecaprenyl-GlcNAc + 2 tRNA(Gly) + 2 H(+). Functionally, catalyzes the formation of the pentaglycine interpeptide bridge, which is characteristic of the S.aureus peptidoglycan. Adds glycines 2 and 3 of the pentaglycine bridge, using glycyl-tRNA(Gly) as donor. Involved in resistance to methicillin. This chain is Aminoacyltransferase FemA (femA), found in Staphylococcus aureus (strain Mu50 / ATCC 700699).